Here is an 806-residue protein sequence, read N- to C-terminus: Acetyl-CoA decarbonylase/synthase complex subunit alpha 1 (806 aa).

[4Fe-4S] cluster contacts are provided by cysteine 73, cysteine 76, cysteine 77, cysteine 79, cysteine 84, and cysteine 94. Position 117 (histidine 117) interacts with CO. Residues histidine 250, cysteine 278, and cysteine 323 each coordinate [Ni-4Fe-4S] cluster. 4Fe-4S ferredoxin-type domains are found at residues 406–436 and 445–475; these read SDEQ…IPEA and FSYL…LSVI. The [4Fe-4S] cluster site is built by cysteine 417, cysteine 420, cysteine 423, cysteine 427, cysteine 455, cysteine 458, cysteine 461, and cysteine 465. Cysteine 523, cysteine 552, and cysteine 587 together coordinate [Ni-4Fe-4S] cluster.

Belongs to the Ni-containing carbon monoxide dehydrogenase family. As to quaternary structure, heterotetramer of two alpha and two epsilon subunits. The ACDS complex is made up of alpha, epsilon, beta, gamma and delta subunits with a probable stoichiometry of (alpha(2)epsilon(2))(4)-beta(8)-(gamma(1)delta(1))(8). [4Fe-4S] cluster serves as cofactor. It depends on [Ni-4Fe-4S] cluster as a cofactor.

The enzyme catalyses CO + 2 oxidized [2Fe-2S]-[ferredoxin] + H2O = 2 reduced [2Fe-2S]-[ferredoxin] + CO2 + 2 H(+). It functions in the pathway one-carbon metabolism; methanogenesis from acetate. Functionally, part of the ACDS complex that catalyzes the reversible cleavage of acetyl-CoA, allowing growth on acetate as sole source of carbon and energy. The alpha-epsilon subcomponent functions as a carbon monoxide dehydrogenase. This chain is Acetyl-CoA decarbonylase/synthase complex subunit alpha 1, found in Methanosarcina mazei (strain ATCC BAA-159 / DSM 3647 / Goe1 / Go1 / JCM 11833 / OCM 88) (Methanosarcina frisia).